A 346-amino-acid chain; its full sequence is MESVSCSAAAVRTGDMESQRDLSLVPERLQRREQERQLEVERRKQKRQNQEVEKENSHFFVATFVRERAAVEELLERAESVERLEEAASRLQGLQKLINDSVFFLAAYDLRQGQEALARLQAALAERRRGLQPKKRFAFKTRGKDAASSTKVDAAPGIPPAVESIQDSPLPKKAEGDLGPSWVCGFSNLESQVLEKRASELHQRDVLLTELSNCTVRLYGNPNTLRLTKAHSCKLLCGPVSTSVFLEDCSDCVLAVACQQLRIHSTKDTRIFLQVTSRAIVEDCSGIQFAPYTWSYPEIDKDFESSGLDRSKNNWNDVDDFNWLARDMASPNWSILPEEERNIQWD.

Residue Met1 is modified to N-acetylmethionine. Positions 1 to 26 (MESVSCSAAAVRTGDMESQRDLSLVP) are disordered. Phosphoserine is present on residues Ser80 and Ser168. Positions 140–171 (KTRGKDAASSTKVDAAPGIPPAVESIQDSPLP) are disordered. The C-CAP/cofactor C-like domain maps to 171 to 323 (PKKAEGDLGP…NWNDVDDFNW (153 aa)).

This sequence belongs to the TBCC family. Supercomplex made of cofactors A to E. Cofactors A and D function by capturing and stabilizing tubulin in a quasi-native conformation. Cofactor E binds to the cofactor D-tubulin complex; interaction with cofactor C then causes the release of tubulin polypeptides that are committed to the native state. In terms of tissue distribution, expressed in the retina. Expressed in the rod and cone photoreceptors, extending from the inner segments (IS), through the outer nuclear layer (ONL) and into the synapses in the outer plexiform layer (OPL). Strongly expressed to the photoreceptor connecting cilium at the tips of the IS (at protein level).

Its subcellular location is the cytoplasm. Its function is as follows. Tubulin-folding protein; involved in the final step of the tubulin folding pathway. The sequence is that of Tubulin-specific chaperone C (TBCC) from Homo sapiens (Human).